The sequence spans 556 residues: DNA ligase (556 aa).

E245 serves as a coordination point for ATP. The active-site N6-AMP-lysine intermediate is K247. ATP contacts are provided by R252, R267, E296, F336, R408, and K414.

The protein belongs to the ATP-dependent DNA ligase family. It depends on Mg(2+) as a cofactor.

The catalysed reaction is ATP + (deoxyribonucleotide)n-3'-hydroxyl + 5'-phospho-(deoxyribonucleotide)m = (deoxyribonucleotide)n+m + AMP + diphosphate.. In terms of biological role, DNA ligase that seals nicks in double-stranded DNA during DNA replication, DNA recombination and DNA repair. This Methanosphaerula palustris (strain ATCC BAA-1556 / DSM 19958 / E1-9c) protein is DNA ligase.